A 95-amino-acid chain; its full sequence is Small ribosomal subunit protein bS6 (95 aa).

This sequence belongs to the bacterial ribosomal protein bS6 family.

Its function is as follows. Binds together with bS18 to 16S ribosomal RNA. This Corynebacterium kroppenstedtii (strain DSM 44385 / JCM 11950 / CIP 105744 / CCUG 35717) protein is Small ribosomal subunit protein bS6.